The chain runs to 123 residues: WAP four-disulfide core domain protein 5 (123 aa).

An N-terminal signal peptide occupies residues 1-24 (MRIQSLLLLGALLAVGSQPPAAFG). WAP domains lie at 27-73 (KGEK…CVPR) and 74-121 (VSVK…RDPA). Cystine bridges form between Cys34/Cys62, Cys41/Cys66, Cys49/Cys61, Cys55/Cys70, Cys81/Cys109, Cys88/Cys113, Cys96/Cys108, and Cys102/Cys117.

It localises to the secreted. Functionally, putative acid-stable proteinase inhibitor. This is WAP four-disulfide core domain protein 5 (WFDC5) from Saimiri boliviensis boliviensis (Bolivian squirrel monkey).